Consider the following 722-residue polypeptide: Glycine--tRNA ligase beta subunit (722 aa).

It belongs to the class-II aminoacyl-tRNA synthetase family. Tetramer of two alpha and two beta subunits.

It is found in the cytoplasm. It catalyses the reaction tRNA(Gly) + glycine + ATP = glycyl-tRNA(Gly) + AMP + diphosphate. This chain is Glycine--tRNA ligase beta subunit (glyS), found in Synechocystis sp. (strain ATCC 27184 / PCC 6803 / Kazusa).